Consider the following 405-residue polypeptide: Protein PAG1 (405 aa).

The signal sequence occupies residues 1 to 50 (MVSLIILFRLTFAIANRVRTLMKVLVIVSFFVLTGSASADSGALSLSGAA). 4 N-linked (GlcNAc...) asparagine glycosylation sites follow: asparagine 55, asparagine 104, asparagine 256, and asparagine 351. Alanine 391 carries the GPI-anchor amidated alanine lipid modification. Positions 392–405 (DSLRRTLALLFLLF) are cleaved as a propeptide — removed in mature form.

The protein resides in the cell membrane. The polypeptide is Protein PAG1 (PAG1) (Trypanosoma brucei brucei).